The following is a 148-amino-acid chain: Nucleoside diphosphate kinase A (148 aa).

6 residues coordinate ATP: lysine 9, phenylalanine 57, arginine 85, threonine 91, arginine 102, and asparagine 112. Histidine 115 (pros-phosphohistidine intermediate) is an active-site residue.

It belongs to the NDK family. It depends on Mg(2+) as a cofactor.

It carries out the reaction a 2'-deoxyribonucleoside 5'-diphosphate + ATP = a 2'-deoxyribonucleoside 5'-triphosphate + ADP. It catalyses the reaction a ribonucleoside 5'-diphosphate + ATP = a ribonucleoside 5'-triphosphate + ADP. In terms of biological role, major role in the synthesis of nucleoside triphosphates other than ATP. The ATP gamma phosphate is transferred to the NDP beta phosphate via a ping-pong mechanism, using a phosphorylated active-site intermediate. This chain is Nucleoside diphosphate kinase A, found in Flaveria bidentis (Coastal plain yellowtops).